Reading from the N-terminus, the 562-residue chain is Gut esterase 1 (562 aa).

A signal peptide spans 1–16 (MRIFLVSVILINACWA). An N-linked (GlcNAc...) asparagine; atypical glycan is attached at Asn73. The cysteines at positions 75 and 93 are disulfide-linked. Ser198 serves as the catalytic Acyl-ester intermediate. A disulfide bridge connects residues Cys250 and Cys258. Catalysis depends on charge relay system residues Glu319 and His452. The Prevents secretion from ER signature appears at 559-562 (KDEL).

It belongs to the type-B carboxylesterase/lipase family. Expressed only in the intestine.

It is found in the endoplasmic reticulum lumen. The catalysed reaction is a carboxylic ester + H2O = an alcohol + a carboxylate + H(+). This is Gut esterase 1 (ges-1) from Caenorhabditis elegans.